The sequence spans 287 residues: Bifunctional protein FolD (287 aa).

NADP(+)-binding positions include 166-168 and Ile-232; that span reads GAS.

The protein belongs to the tetrahydrofolate dehydrogenase/cyclohydrolase family. As to quaternary structure, homodimer.

It catalyses the reaction (6R)-5,10-methylene-5,6,7,8-tetrahydrofolate + NADP(+) = (6R)-5,10-methenyltetrahydrofolate + NADPH. The enzyme catalyses (6R)-5,10-methenyltetrahydrofolate + H2O = (6R)-10-formyltetrahydrofolate + H(+). It participates in one-carbon metabolism; tetrahydrofolate interconversion. Functionally, catalyzes the oxidation of 5,10-methylenetetrahydrofolate to 5,10-methenyltetrahydrofolate and then the hydrolysis of 5,10-methenyltetrahydrofolate to 10-formyltetrahydrofolate. This chain is Bifunctional protein FolD, found in Buchnera aphidicola subsp. Baizongia pistaciae (strain Bp).